The sequence spans 262 residues: MLQQKLNKLKDGLNTFSSKSVVCARSKLFDKRPTRRPRCWRKLSEIDKKFHVCRHVDTFLDLCGGPGEFANYTMSLNPLCKAYGVTLTNNSVCVYKPTVRKRKNFTTITGPDKSGDVFDKNVVFEISIKCGNACDLVLADGSVDVNGRENEQERLNFDLIMCETQLILICLRPGGNCVLKVFDAFEHETIQMLNKFVNHFEKWVLYKPPSSRPANSERYLICFNKLVRPYCNNYVNELEKQFEKYYRIQLKNLNKLINLLKI.

Positions 34–226 constitute a RrmJ-type SAM-dependent 2'-O-MTase domain; that stretch reads TRRPRCWRKL…ERYLICFNKL (193 aa). The S-adenosyl-L-methionine site is built by Gly-67 and Asp-140. Lys-180 acts as the Proton acceptor in catalysis.

It catalyses the reaction a 5'-end (N(7)-methyl 5'-triphosphoguanosine)-ribonucleoside in mRNA + S-adenosyl-L-methionine = a 5'-end (N(7)-methyl 5'-triphosphoguanosine)-(2'-O-methyl-ribonucleoside) in mRNA + S-adenosyl-L-homocysteine + H(+). In terms of biological role, S-adenosyl-L-methionine-dependent methyltransferase that mediates mRNA cap 2'-O-ribose methylation to the 5'-cap structure of late viral transcripts. The chain is Cap-specific mRNA (nucleoside-2'-O-)-methyltransferase from Lepidoptera (butterflies and moths).